The primary structure comprises 346 residues: Heterogeneous nuclear ribonucleoprotein A2 homolog 1 (346 aa).

RRM domains are found at residues 9 to 92 (RKLF…ESAK) and 100 to 179 (KKLF…LSKQ). 2 disordered regions span residues 182–217 (QDVQ…FRGG) and 326–346 (NYGP…RNRY). The span at 193 to 217 (GNFGFGDSRGGGNFGSGPGGNFRGG) shows a compositional bias: gly residues. The tract at residues 297–340 (QQSSNYGPMKSGGNFGGNRSMGGGPYGGGNYGPGNASGGNGGGY) is nuclear targeting sequence.

It is found in the nucleus. Its function is as follows. Forms complexes (ribonucleosomes) with at least 20 other different hnRNP and heterogeneous nuclear RNA in the nucleus. In Xenopus laevis (African clawed frog), this protein is Heterogeneous nuclear ribonucleoprotein A2 homolog 1.